The primary structure comprises 372 residues: E3 ubiquitin-protein ligase RNF34 (372 aa).

An FYVE-type zinc finger spans residues 56 to 107 (EGPNIVCKACGLSFSVFRKKHVCCDCKKDFCSVCSVLQENLRRCSTCHLLQE). One can recognise an SAP 1 domain in the interval 115 to 134 (LMRLKVKDLRQYLILRNIPI). S169 is subject to Phosphoserine. Positions 194-253 (QGELMDGDQTSRSGVPAQVQSEITSANTEDDDDDDDEDDDDEEENAEDRNPGLSKERVRA) are disordered. Polar residues predominate over residues 201-220 (DQTSRSGVPAQVQSEITSAN). Residues 221–239 (TEDDDDDDDEDDDDEEENA) show a composition bias toward acidic residues. A compositionally biased stretch (basic and acidic residues) spans 240 to 252 (EDRNPGLSKERVR). Residues S254 and S256 each carry the phosphoserine modification. The SAP 2 domain occupies 264–278 (VEGMSVRQLKEILAR). The RING-type zinc-finger motif lies at 325–360 (CRICMDAVIDCVLLECGHMVTCTKCGKRMSECPICR).

Interacts with CASP8 and CASP10. Interacts (via RING-type zinc finger) with PPARGC1A. Interacts with NOD1. Interacts with p53/TP53; involved in p53/TP53 ubiquitination. Interacts (via RING-type zinc finger) with MDM2; the interaction stabilizes MDM2. In terms of processing, autoubiquitinated (in vitro). Post-translationally, proteolytically cleaved by caspases upon induction of apoptosis by TNF. In terms of tissue distribution, ubiquitous. Detected in heart, brain, liver, skeletal muscle, kidney, pancreas, spleen, thymus, prostate, testis, ovary, colon and leukocytes.

Its subcellular location is the cell membrane. The protein resides in the endomembrane system. The protein localises to the nucleus. It localises to the nucleus speckle. It is found in the cytoplasm. Its subcellular location is the cytosol. It catalyses the reaction S-ubiquitinyl-[E2 ubiquitin-conjugating enzyme]-L-cysteine + [acceptor protein]-L-lysine = [E2 ubiquitin-conjugating enzyme]-L-cysteine + N(6)-ubiquitinyl-[acceptor protein]-L-lysine.. Its pathway is protein modification; protein ubiquitination. Functionally, E3 ubiquitin-protein ligase that regulates several biological processes through the ubiquitin-mediated proteasomal degradation of various target proteins. Ubiquitinates the caspases CASP8 and CASP10, promoting their proteasomal degradation, to negatively regulate cell death downstream of death domain receptors in the extrinsic pathway of apoptosis. May mediate 'Lys-48'-linked polyubiquitination of RIPK1 and its subsequent proteasomal degradation thereby indirectly regulating the tumor necrosis factor-mediated signaling pathway. Negatively regulates p53/TP53 through its direct ubiquitination and targeting to proteasomal degradation. Indirectly, may also negatively regulate p53/TP53 through ubiquitination and degradation of SFN. Mediates PPARGC1A proteasomal degradation probably through ubiquitination thereby indirectly regulating the metabolism of brown fat cells. Possibly involved in innate immunity, through 'Lys-48'-linked polyubiquitination of NOD1 and its subsequent proteasomal degradation. This is E3 ubiquitin-protein ligase RNF34 from Homo sapiens (Human).